Here is a 537-residue protein sequence, read N- to C-terminus: Lysosomal cobalamin transport escort protein LMBD1 (537 aa).

Over 1 to 7 the chain is Extracellular; it reads MAAAAAE. A helical membrane pass occupies residues 8–28; the sequence is LVIGWCIFGLLLLAILAFCWV. Residues 29 to 47 lie on the Cytoplasmic side of the membrane; that stretch reads YVRKYQSQRESEVVSTVTA. Residues 48–68 traverse the membrane as a helical segment; it reads IFSLAVALITSALLPVDIFLV. At 69-97 the chain is on the extracellular side; sequence SYMKNQNGTFKDWADANVTVQIENTVLYG. N75 and N85 each carry an N-linked (GlcNAc...) asparagine glycan. The chain crosses the membrane as a helical span at residues 98 to 118; that stretch reads YYTLYSVILFCVFFWIPFVYF. Topologically, residues 119–141 are cytoplasmic; it reads YYEEKDEDDASKCTQIKTALKYT. Residues 142-162 traverse the membrane as a helical segment; the sequence is LGFVVICALLLLVGAFVPLHL. At 163 to 185 the chain is on the extracellular side; the sequence is PNNNNSTEWEKVKLLFEDLGTGQ. 2 N-linked (GlcNAc...) asparagine glycosylation sites follow: N166 and N167. The helical transmembrane segment at 186-206 threads the bilayer; that stretch reads GLAALSFSISSLTLIGMLAAI. The Cytoplasmic segment spans residues 207–302; the sequence is TYTAYGMSAL…KFCGALRPLK (96 aa). Positions 229–232 match the YERL motif; mediates interaction with adapter protein complex 2 and is essential for its function in clathrin-mediated endocytosis of INSR motif; that stretch reads YERL. Phosphothreonine is present on T235. The WTKF motif; mediates interaction with adapter protein complex 2 and is essential for its function in clathrin-mediated endocytosis of INSR signature appears at 291-294; sequence WTKF. Residues 303–323 form a helical membrane-spanning segment; the sequence is IIWGIFFILVALLFVISLFLS. Residues 324 to 361 are Extracellular-facing; sequence NLDKALHSAGIDSGFIIFGTNLSNPLNMLLPLLQTVFP. The N-linked (GlcNAc...) asparagine glycan is linked to N344. The helical transmembrane segment at 362–382 threads the bilayer; it reads LDYILITIIIMYFIFTSMAGI. The Cytoplasmic portion of the chain corresponds to 383-405; it reads RNIGIWFFWIRLYKIRRGRTRPQ. A helical membrane pass occupies residues 406-426; it reads ALLFLCMILLLIVLHTSYMIY. Over 427–483 the chain is Extracellular; the sequence is SLAPQYVMYGSQNYLIESNITSDAHKGNSTLAVPKRCDADAPKDQCTVTRTYIFLHK. Residues N445 and N454 are each glycosylated (N-linked (GlcNAc...) asparagine). Residues 484–504 traverse the membrane as a helical segment; the sequence is FWFFSAAYYFGNWAFLVVFLI. The Cytoplasmic portion of the chain corresponds to 505 to 537; sequence GLIVSCCKGKKSVIEGVDEDSDLSDDEPSAYSA. Residues S525 and S528 each carry the phosphoserine modification.

This sequence belongs to the LIMR family. LMBRD1 subfamily. In terms of assembly, interacts with ABCD4; this interaction induces the translocation of ABCD4 from the endoplasmic reticulum to the lysosome. Interacts with ABCD4 and MMACHC; this interaction ensures the transport of cobalamin from the lysosome to the cytoplasm. Interacts with INSR, adapter protein complex 2 and clathrin heavy chain. Post-translationally, N-glycosylated.

The protein resides in the endoplasmic reticulum membrane. The protein localises to the lysosome membrane. It localises to the cell membrane. Its subcellular location is the cytoplasmic vesicle. It is found in the clathrin-coated vesicle. In terms of biological role, lysosomal membrane chaperone required to export cobalamin (vitamin B12) from the lysosome to the cytosol, allowing its conversion to cofactors. Targets ABCD4 transporter from the endoplasmic reticulum to the lysosome. Then forms a complex with lysosomal ABCD4 and cytoplasmic MMACHC to transport cobalamin across the lysosomal membrane. Acts as an adapter protein which plays an important role in mediating and regulating the internalization of the insulin receptor (INSR). Involved in clathrin-mediated endocytosis of INSR via its interaction with adapter protein complex 2. Essential for the initiation of gastrulation and early formation of mesoderm structures during embryogenesis. This is Lysosomal cobalamin transport escort protein LMBD1 from Mus musculus (Mouse).